A 555-amino-acid polypeptide reads, in one-letter code: 4-coumarate--CoA ligase-like 9 (555 aa).

ATP is bound by residues S200, S201, G202, T203, T204, and K208. A (E)-4-coumaroyl-AMP-binding site is contributed by Y248. R269 is a binding site for CoA. An SBD1 region spans residues 271–342 (DLRTFLRALV…RKFPGVQVEE (72 aa)). A320 contacts (E)-4-coumaroyl-AMP. Residues E342, A343, T347, D431, and R446 each coordinate ATP. (E)-4-coumaroyl-AMP contacts are provided by A343 and T347. The segment at 343 to 410 (AYGLTEHSCI…VRSQSVMQGY (68 aa)) is SBD2. 2 residues coordinate (E)-4-coumaroyl-AMP: K448 and K452. Residues K454 and G455 each contribute to the CoA site. Residue K537 coordinates ATP.

The protein belongs to the ATP-dependent AMP-binding enzyme family. As to quaternary structure, interacts with STS1. The cofactor is Mg(2+).

The catalysed reaction is (E)-4-coumarate + ATP + CoA = (E)-4-coumaroyl-CoA + AMP + diphosphate. It carries out the reaction (E)-4-coumarate + ATP + H(+) = (E)-4-coumaroyl-AMP + diphosphate. It catalyses the reaction (E)-4-coumaroyl-AMP + CoA = (E)-4-coumaroyl-CoA + AMP + H(+). Carboxylate--CoA ligase that may use 4-coumarate as substrate. Follows a two-step reaction mechanism, wherein the carboxylate substrate first undergoes adenylation by ATP, followed by a thioesterification in the presence of CoA to yield the final CoA thioester. In Oryza sativa subsp. japonica (Rice), this protein is 4-coumarate--CoA ligase-like 9 (4CLL9).